A 42-amino-acid chain; its full sequence is uncharacterized protein (42 aa).

This is an uncharacterized protein from Escherichia coli (Bacteriophage T4).